A 347-amino-acid polypeptide reads, in one-letter code: NADH-quinone oxidoreductase subunit H (347 aa).

9 consecutive transmembrane segments (helical) span residues 13–33 (LIIALKSVVLLVVLLIVVAYL), 50–70 (PNVVGPWGLFQAFADLLKFVF), 82–102 (GVFLLAPFISAVLAMATWAVI), 115–135 (VGILYIFAISSLEVYGVIMGG), 161–181 (IGFVIVTVLLTVGSLNLTDIV), 198–218 (FLDWNWLCLFPMFVVFFISAL), 248–268 (FLLFFLGEYVAITLMCALMTV), 286–306 (VPGIIWFMLKLCFCFFLFAMV), and 325–345 (VFLPISLFMVVATATFLKVFG).

This sequence belongs to the complex I subunit 1 family. NDH-1 is composed of 14 different subunits. Subunits NuoA, H, J, K, L, M, N constitute the membrane sector of the complex.

Its subcellular location is the cell inner membrane. The catalysed reaction is a quinone + NADH + 5 H(+)(in) = a quinol + NAD(+) + 4 H(+)(out). In terms of biological role, NDH-1 shuttles electrons from NADH, via FMN and iron-sulfur (Fe-S) centers, to quinones in the respiratory chain. The immediate electron acceptor for the enzyme in this species is believed to be ubiquinone. Couples the redox reaction to proton translocation (for every two electrons transferred, four hydrogen ions are translocated across the cytoplasmic membrane), and thus conserves the redox energy in a proton gradient. This subunit may bind ubiquinone. In Brucella ovis (strain ATCC 25840 / 63/290 / NCTC 10512), this protein is NADH-quinone oxidoreductase subunit H.